A 245-amino-acid polypeptide reads, in one-letter code: Complement C1q subcomponent subunit A (245 aa).

A signal peptide spans 1 to 22 (MEGPRGWLVLCVLAISLASMVT). The span at 27–38 (RAPDGKKGEAGR) shows a compositional bias: basic and acidic residues. A disordered region spans residues 27–114 (RAPDGKKGEA…SPGNIKDQPR (88 aa)). The region spanning 31–109 (GKKGEAGRPG…KGTKGSPGNI (79 aa)) is the Collagen-like domain. The residue at position 33 (K33) is a 5-hydroxylysine. K33 is a glycosylation site (O-linked (Gal...) hydroxylysine). 2 positions are modified to 4-hydroxyproline: P39 and P45. 5-hydroxylysine is present on K48. The O-linked (Gal...) hydroxylysine glycan is linked to K48. Residues P54 and P57 each carry the 4-hydroxyproline modification. At K67 the chain carries 5-hydroxylysine. K67 carries an O-linked (Gal...) hydroxylysine glycan. P73, P79, and P85 each carry 4-hydroxyproline. The residue at position 100 (K100) is a 5-hydroxylysine. K100 carries O-linked (Gal...) hydroxylysine glycosylation. Residues 110 to 245 (KDQPRPAFSA…FSGFLIFPSA (136 aa)) form the C1q domain. N146 is a glycosylation site (N-linked (GlcNAc...) asparagine). An intrachain disulfide couples C172 to C190. Ca(2+) is bound at residue Q199.

As to quaternary structure, core component of the complement C1 complex, a calcium-dependent complex composed of 1 molecule of the C1Q subcomplex, 2 molecules of C1R and 2 molecules of C1S. The C1Q subcomplex is composed 18 subunits: 3 chains of C1QA, C1QB, and C1QC trimerize to form 6 collagen-like triple helices connected to six globular ligand-recognition modules (C1q domain). Interacts with CR1 (via Sushi 24 and Sushi 25 domains). Interacts (via C-terminus) with CD33; this interaction activates CD33 inhibitory motifs. (Microbial infection) Interacts with Staphylococcus aureus protein Cna; this interaction results in the inhibition of the classical complement pathway. Post-translationally, O-linked glycans are assumed to be the Glc-Gal disaccharides typically found as secondary modifications of hydroxylated lysines in collagen-like domains.

Its subcellular location is the secreted. It is found in the cell surface. Its activity is regulated as follows. The C1Q subcomplex is inhibited by sulfated molecules, such as triterpenoid sulfates, heparan sulfate, or chondroitin sulfates. Functionally, core component of the complement C1 complex, a multiprotein complex that initiates the classical pathway of the complement system, a cascade of proteins that leads to phagocytosis and breakdown of pathogens and signaling that strengthens the adaptive immune system. The classical complement pathway is initiated by the C1Q subcomplex of the C1 complex, which specifically binds IgG or IgM immunoglobulins complexed with antigens, forming antigen-antibody complexes on the surface of pathogens: C1QA, together with C1QB and C1QC, specifically recognizes and binds the Fc regions of IgG or IgM via its C1q domain. Immunoglobulin-binding activates the proenzyme C1R, which cleaves C1S, initiating the proteolytic cascade of the complement system. The C1Q subcomplex is activated by a hexamer of IgG complexed with antigens, while it is activated by a pentameric IgM. The C1Q subcomplex also recognizes and binds phosphatidylserine exposed on the surface of cells undergoing programmed cell death, possibly promoting activation of the complement system. This Homo sapiens (Human) protein is Complement C1q subcomponent subunit A.